The sequence spans 205 residues: Regulator of G-protein signaling 4 (205 aa).

S-palmitoyl cysteine attachment occurs at residues Cys-2, Cys-12, and Cys-95. Positions 62–178 constitute an RGS domain; sequence SLENLISHEC…LKSRFYLDLV (117 aa).

In terms of processing, palmitoylated on Cys-2 and/or Cys-12. Post-translationally, phosphorylated by cyclic GMP-dependent protein kinase.

Inhibits signal transduction by increasing the GTPase activity of G protein alpha subunits thereby driving them into their inactive GDP-bound form. Activity on G(z)-alpha is inhibited by phosphorylation of the G-protein. Activity on G(z)-alpha and G(i)-alpha-1 is inhibited by palmitoylation of the G-protein. In Bos taurus (Bovine), this protein is Regulator of G-protein signaling 4 (RGS4).